We begin with the raw amino-acid sequence, 149 residues long: MADQLTEEQIAEFKEAFSLFDKDGDGTITTKELGTVMRSLGQNPTEAELQDMINEVDADGNGTIDFPEFLSLMARKMKDTDTEEELIEAFKVFDRDGNGFISAAELRHVMTNLGEKLTDEEVDEMIREADVDGDGQINYEEFVKMMMAK.

At A2 the chain carries N-acetylalanine. 4 consecutive EF-hand domains span residues 8–43 (EQIA…LGQN), 44–79 (PTEA…KMKD), 81–116 (DTEE…LGEK), and 117–149 (LTDE…MMAK). Ca(2+) contacts are provided by D21, D23, D25, T27, E32, D57, D59, N61, T63, E68, D94, D96, N98, and E105. Position 116 is an N6,N6,N6-trimethyllysine (K116). Residues D130, D132, D134, Q136, and E141 each coordinate Ca(2+).

Belongs to the calmodulin family.

Its function is as follows. Calmodulin mediates the control of a large number of enzymes, ion channels and other proteins by Ca(2+). Among the enzymes to be stimulated by the calmodulin-Ca(2+) complex are a number of protein kinases and phosphatases. The sequence is that of Calmodulin from Karlodinium veneficum (Dinoflagellate).